A 268-amino-acid chain; its full sequence is Putative hydro-lyase ACICU_01268 (268 aa).

This sequence belongs to the D-glutamate cyclase family.

The polypeptide is Putative hydro-lyase ACICU_01268 (Acinetobacter baumannii (strain ACICU)).